A 257-amino-acid chain; its full sequence is Type III pantothenate kinase (257 aa).

Position 6-13 (6-13 (DVGNTNTV)) interacts with ATP. Residues Y100 and 107 to 110 (GADR) each bind substrate. Catalysis depends on D109, which acts as the Proton acceptor. D129 is a K(+) binding site. Residue T132 coordinates ATP. T185 contributes to the substrate binding site.

This sequence belongs to the type III pantothenate kinase family. In terms of assembly, homodimer. NH4(+) is required as a cofactor. Requires K(+) as cofactor.

The protein localises to the cytoplasm. The enzyme catalyses (R)-pantothenate + ATP = (R)-4'-phosphopantothenate + ADP + H(+). The protein operates within cofactor biosynthesis; coenzyme A biosynthesis; CoA from (R)-pantothenate: step 1/5. Its function is as follows. Catalyzes the phosphorylation of pantothenate (Pan), the first step in CoA biosynthesis. The protein is Type III pantothenate kinase of Desulfatibacillum aliphaticivorans.